The sequence spans 377 residues: Queuine tRNA-ribosyltransferase (377 aa).

The active-site Proton acceptor is Asp89. Substrate-binding positions include 89–93 (DSGGF), Asp143, Gln187, and Gly214. An RNA binding region spans residues 245 to 251 (GVGKPED). The active-site Nucleophile is Asp264. The RNA binding; important for wobble base 34 recognition stretch occupies residues 269–273 (TRNAR). Cys302, Cys304, Cys307, and His333 together coordinate Zn(2+).

This sequence belongs to the queuine tRNA-ribosyltransferase family. As to quaternary structure, homodimer. Within each dimer, one monomer is responsible for RNA recognition and catalysis, while the other monomer binds to the replacement base PreQ1. Zn(2+) serves as cofactor.

The enzyme catalyses 7-aminomethyl-7-carbaguanine + guanosine(34) in tRNA = 7-aminomethyl-7-carbaguanosine(34) in tRNA + guanine. The protein operates within tRNA modification; tRNA-queuosine biosynthesis. Catalyzes the base-exchange of a guanine (G) residue with the queuine precursor 7-aminomethyl-7-deazaguanine (PreQ1) at position 34 (anticodon wobble position) in tRNAs with GU(N) anticodons (tRNA-Asp, -Asn, -His and -Tyr). Catalysis occurs through a double-displacement mechanism. The nucleophile active site attacks the C1' of nucleotide 34 to detach the guanine base from the RNA, forming a covalent enzyme-RNA intermediate. The proton acceptor active site deprotonates the incoming PreQ1, allowing a nucleophilic attack on the C1' of the ribose to form the product. After dissociation, two additional enzymatic reactions on the tRNA convert PreQ1 to queuine (Q), resulting in the hypermodified nucleoside queuosine (7-(((4,5-cis-dihydroxy-2-cyclopenten-1-yl)amino)methyl)-7-deazaguanosine). The sequence is that of Queuine tRNA-ribosyltransferase from Shewanella halifaxensis (strain HAW-EB4).